Consider the following 316-residue polypeptide: Acetaldehyde dehydrogenase 3 (316 aa).

An NAD(+)-binding site is contributed by 12 to 15 (SGNI). Residue Cys132 is the Acyl-thioester intermediate of the active site. NAD(+) is bound by residues 163-171 (SAGPGTRAN) and Asn289.

It belongs to the acetaldehyde dehydrogenase family.

The enzyme catalyses acetaldehyde + NAD(+) + CoA = acetyl-CoA + NADH + H(+). The polypeptide is Acetaldehyde dehydrogenase 3 (mhpF) (Comamonas testosteroni (Pseudomonas testosteroni)).